The primary structure comprises 78 residues: Chassatide C4 (78 aa).

Positions 1–23 (MAKFATQLFLLTASVVMLEVQSS) are cleaved as a signal peptide. Residues 24–42 (IVIMQDPDLGRKLIMNPAN) constitute a propeptide, removed in mature form. A cross-link (cyclopeptide (Gly-Asn)) is located at residues 43–71 (GASCGETCFTGICFTAGCSCNPWPTCTRN). 3 disulfide bridges follow: cysteine 46–cysteine 60, cysteine 50–cysteine 62, and cysteine 55–cysteine 68. A propeptide spans 72–78 (GLNPESI) (removed in mature form).

In terms of processing, this is a cyclic peptide.

Its function is as follows. Probably participates in a plant defense mechanism. The protein is Chassatide C4 of Chassalia chartacea (Chassalia curviflora).